We begin with the raw amino-acid sequence, 114 residues long: Large ribosomal subunit protein uL22 (114 aa).

It belongs to the universal ribosomal protein uL22 family. Part of the 50S ribosomal subunit.

Its function is as follows. This protein binds specifically to 23S rRNA; its binding is stimulated by other ribosomal proteins, e.g. L4, L17, and L20. It is important during the early stages of 50S assembly. It makes multiple contacts with different domains of the 23S rRNA in the assembled 50S subunit and ribosome. In terms of biological role, the globular domain of the protein is located near the polypeptide exit tunnel on the outside of the subunit, while an extended beta-hairpin is found that lines the wall of the exit tunnel in the center of the 70S ribosome. The chain is Large ribosomal subunit protein uL22 from Alcanivorax borkumensis (strain ATCC 700651 / DSM 11573 / NCIMB 13689 / SK2).